A 686-amino-acid chain; its full sequence is MGCFCAVPEEFYCEVLLLDESKLTLTTQQQGIKKSTKGSVVLDHVFHHVNLVEIDYFGLRYCDRSHQTYWLDPAKTLAEHKELINTGPPYTLYFGIKFYAEDPCKLKEEITRYQFFLQVKQDVLQGRLPCPVNTAAQLGAYAIQSELGDYDPYKHTAGYVSEYRFVPDQKEELEEAIERIHKTLMGQIPSEAELNYLRTAKSLEMYGVDLHPVYGENKSEYFLGLTPVGVVVYKNKKQVGKYFWPRITKVHFKETQFELRVLGKDCNETSFFFEARSKTACKHLWKCSVEHHTFFRMPENESNSLSRKLSKFGSIRYKHRYSGRTALQMSRDLSIQLPRPDQNVTRSRSKTYPKRIAQTQPAESNSISRITANMENGENEGTIKIIAPSPVKSFKKAKNENSPDTQRSKSHAPWEENGPQSGLYNSPSDRTKSPKFPYTRRRNPSCGSDNDSVQPVRRRKAHNSGEDSDLKQRRRSRSRCNTSSGSESENSNREYRKKRNRIRQENDMVDSAPQWEAVLRRQKEKNQADPNNRRSRHRSRSRSPDIQAKEELWKHIQKELVDPSGLSEEQLKEIPYTKIETQGDPIRIRHSHSPRSYRQYRRSQCSDGERSVLSEVNSKTDLVPPLPVTRSSDAQGSGDATVHQRRNGSKDSLMEEKPQTSTNNLAGKHTAKTIKTIQASRLKTET.

The 289-residue stretch at 11-299 folds into the FERM domain; that stretch reads FYCEVLLLDE…EHHTFFRMPE (289 aa). At Ser-304 the chain carries Phosphoserine. The segment at 331-686 is disordered; that stretch reads RDLSIQLPRP…IQASRLKTET (356 aa). A compositionally biased stretch (polar residues) spans 357 to 376; that stretch reads AQTQPAESNSISRITANMEN. Residues Ser-389, Ser-393, and Ser-402 each carry the phosphoserine modification. A compositionally biased stretch (polar residues) spans 418–428; the sequence is GPQSGLYNSPS. Low complexity predominate over residues 479 to 489; sequence RCNTSSGSESE. Basic and acidic residues-rich tracts occupy residues 518-527 and 547-561; these read VLRRQKEKNQ and QAKEELWKHIQKELV. Residues 588–601 show a composition bias toward basic residues; that stretch reads IRHSHSPRSYRQYR. A compositionally biased stretch (basic and acidic residues) spans 648-658; that stretch reads GSKDSLMEEKP. A compositionally biased stretch (polar residues) spans 673 to 686; it reads TIKTIQASRLKTET.

In terms of tissue distribution, expressed in many tissues. High levels of expression in brain, liver, thymus and peripheral blood leukocytes and low levels of expression in heart, kidney, testis and colon.

It is found in the cytoplasm. It localises to the cytoskeleton. In Homo sapiens (Human), this protein is Band 4.1-like protein 4A.